The following is an 871-amino-acid chain: Protein arg-6, mitochondrial (871 aa).

The N-terminal 44 residues, 1–44 (MYSACAVALRAGARRVVRRVPKSARALPRAAAARRQISTTAARS), are a transit peptide targeting the mitochondrion. Residues 336–488 (QASTSLSEFK…DFTENGRAML (153 aa)) enclose the N-acetyltransferase domain. Cys-689 is a catalytic residue.

It in the N-terminal section; belongs to the acetylglutamate kinase family. The protein in the C-terminal section; belongs to the NAGSA dehydrogenase family. The protein precursor is cleaved into the two biologically active enzymes, the kinase and the reductase.

It is found in the mitochondrion. It carries out the reaction N-acetyl-L-glutamate 5-semialdehyde + phosphate + NADP(+) = N-acetyl-L-glutamyl 5-phosphate + NADPH + H(+). The catalysed reaction is N-acetyl-L-glutamate + ATP = N-acetyl-L-glutamyl 5-phosphate + ADP. Its pathway is amino-acid biosynthesis; L-arginine biosynthesis; N(2)-acetyl-L-ornithine from L-glutamate: step 2/4. It functions in the pathway amino-acid biosynthesis; L-arginine biosynthesis; N(2)-acetyl-L-ornithine from L-glutamate: step 3/4. The protein is Protein arg-6, mitochondrial (arg-6) of Neurospora crassa (strain ATCC 24698 / 74-OR23-1A / CBS 708.71 / DSM 1257 / FGSC 987).